Here is a 754-residue protein sequence, read N- to C-terminus: 5-methyltetrahydropteroyltriglutamate--homocysteine methyltransferase (754 aa).

5-methyltetrahydropteroyltri-L-glutamate contacts are provided by residues 17-20 (RELK) and Lys-117. Residues 431–433 (IGS) and Glu-484 each bind L-homocysteine. L-methionine contacts are provided by residues 431–433 (IGS) and Glu-484. Residues 515–516 (RC) and Trp-561 each bind 5-methyltetrahydropteroyltri-L-glutamate. An L-homocysteine-binding site is contributed by Asp-599. Asp-599 is an L-methionine binding site. Glu-605 serves as a coordination point for 5-methyltetrahydropteroyltri-L-glutamate. Residues His-641, Cys-643, and Glu-665 each contribute to the Zn(2+) site. His-694 acts as the Proton donor in catalysis. Cys-726 contributes to the Zn(2+) binding site.

The protein belongs to the vitamin-B12 independent methionine synthase family. Zn(2+) serves as cofactor.

It carries out the reaction 5-methyltetrahydropteroyltri-L-glutamate + L-homocysteine = tetrahydropteroyltri-L-glutamate + L-methionine. Its pathway is amino-acid biosynthesis; L-methionine biosynthesis via de novo pathway; L-methionine from L-homocysteine (MetE route): step 1/1. Catalyzes the transfer of a methyl group from 5-methyltetrahydrofolate to homocysteine resulting in methionine formation. The chain is 5-methyltetrahydropteroyltriglutamate--homocysteine methyltransferase from Salmonella typhi.